We begin with the raw amino-acid sequence, 430 residues long: Adenylosuccinate synthetase (430 aa).

Residues 12–18 (GDEGKGK) and 40–42 (GHT) each bind GTP. Catalysis depends on aspartate 13, which acts as the Proton acceptor. Positions 13 and 40 each coordinate Mg(2+). Residues 13–16 (DEGK), 38–41 (NAGH), threonine 128, arginine 142, glutamine 223, threonine 238, and arginine 302 each bind IMP. The active-site Proton donor is histidine 41. Substrate is bound at residue 298-304 (TTTGRPR). Residues arginine 304, 330–332 (SID), and 412–414 (SVG) contribute to the GTP site.

This sequence belongs to the adenylosuccinate synthetase family. Homodimer. It depends on Mg(2+) as a cofactor.

Its subcellular location is the cytoplasm. The catalysed reaction is IMP + L-aspartate + GTP = N(6)-(1,2-dicarboxyethyl)-AMP + GDP + phosphate + 2 H(+). It functions in the pathway purine metabolism; AMP biosynthesis via de novo pathway; AMP from IMP: step 1/2. Functionally, plays an important role in the de novo pathway of purine nucleotide biosynthesis. Catalyzes the first committed step in the biosynthesis of AMP from IMP. This chain is Adenylosuccinate synthetase, found in Streptococcus pyogenes serotype M4 (strain MGAS10750).